A 310-amino-acid polypeptide reads, in one-letter code: Ribosomal RNA small subunit methyltransferase H (310 aa).

S-adenosyl-L-methionine-binding positions include alanine 33–histidine 35, aspartate 53, phenylalanine 79, aspartate 100, and glutamine 107.

This sequence belongs to the methyltransferase superfamily. RsmH family.

It is found in the cytoplasm. The catalysed reaction is cytidine(1402) in 16S rRNA + S-adenosyl-L-methionine = N(4)-methylcytidine(1402) in 16S rRNA + S-adenosyl-L-homocysteine + H(+). Specifically methylates the N4 position of cytidine in position 1402 (C1402) of 16S rRNA. The sequence is that of Ribosomal RNA small subunit methyltransferase H from Clostridium botulinum (strain Alaska E43 / Type E3).